A 169-amino-acid chain; its full sequence is Ribosome maturation factor RimM (169 aa).

One can recognise a PRC barrel domain in the interval 97 to 169 (EDEYYWTDLV…IITADWGLDY (73 aa)).

Belongs to the RimM family. As to quaternary structure, binds ribosomal protein uS19.

It is found in the cytoplasm. An accessory protein needed during the final step in the assembly of 30S ribosomal subunit, possibly for assembly of the head region. Essential for efficient processing of 16S rRNA. May be needed both before and after RbfA during the maturation of 16S rRNA. It has affinity for free ribosomal 30S subunits but not for 70S ribosomes. The protein is Ribosome maturation factor RimM of Neisseria meningitidis serogroup C / serotype 2a (strain ATCC 700532 / DSM 15464 / FAM18).